Here is a 149-residue protein sequence, read N- to C-terminus: DnaJ homolog subfamily C member 24 (149 aa).

The region spanning 11-82 (DWYSILGADP…ETKKEYDLQR (72 aa)) is the J domain. The DPH-type MB domain occupies 93-148 (VDARIYLEEMSWNEDDHSFSLSCRCGGKYSVSKDEAEEVTLISCDTCSLIIELLHY). Cys115, Cys117, Cys136, and Cys139 together coordinate Zn(2+).

The protein belongs to the DPH4 family. In terms of assembly, monomer and homooligomer. Iron binding promotes oligomerization.

The protein resides in the cytoplasm. Its subcellular location is the cytoskeleton. Its pathway is protein modification; peptidyl-diphthamide biosynthesis. Functionally, stimulates the ATPase activity of several Hsp70-type chaperones. This ability is enhanced by iron-binding. The iron-bound form is redox-active and can function as electron carrier. Plays a role in the diphthamide biosynthesis, a post-translational modification of histidine which occurs in translation elongation factor 2 (EEF2). In Bos taurus (Bovine), this protein is DnaJ homolog subfamily C member 24 (DNAJC24).